The primary structure comprises 389 residues: MPGVANSGPSTSSRETANPCSRKKVHFGSIHDAVRAGDVKQLSEIVCLHWLLWHGADITHVTTRGWTASHIAAIRGQDACVQALIMNGANLTAQDDRGCTPLHLAATHGHSFTLQIMLRSGVDPSVTDKREWRPVHYAAFHGRLGCLQLLVKWGCSIEDVDYNGNLPVHLAAMEGHLHCFKFLVSRMSSATQVLKAFNDNGENVLDLAQRFFKQNILQFIQGAEYEGKDLEDQETLAFPGHVAAFKGDLGMLKKLVEDGVININERADNGSTPMHKAAGQGHIECLQWLIKMGADSNITNKAGERPSDVAKRFAHLAAVKLLEELQKYDIDDENEIDENDVKYFIRHGVEGSTDAKDDLCLSDLDKTDARRPSKNCRASWSMNDYVEKN.

Residues Met-1–Ser-21 form a disordered region. Positions Ser-7–Pro-19 are enriched in polar residues. 9 ANK repeats span residues Val-25 to His-60, Arg-64 to Ala-93, Arg-97 to Val-126, Arg-130 to Asp-159, Asn-163 to Gln-192, Asn-200 to Asp-232, Thr-235 to Glu-265, Asn-269 to Ile-298, and Ala-302 to Asp-332.

This chain is Ankyrin repeat domain-containing protein 42 (ANKRD42), found in Homo sapiens (Human).